A 256-amino-acid chain; its full sequence is MKTIDLNCDLGEGFGAWEMGNDAAMIELASSVNVACGFHAGDPDIMRRTVELAKARGVSVGAHPGYRDLHGFGRHPIAGLKASEIENLVAYQIGALQAIATAAGHKVTHVKAHGALSNVACEDDMTAKAIAAGIKAVDPSLIFVVLANSKLVKAGEAANLPMVHEVFADRAYEDDGNLVSRKKPGAVLHDAKAIADRVVRMVQDGAVVSVTGKVIKMRTDTVCIHGDTHGAVEIARTLRQALKDAGIEVAPFKRGA.

It belongs to the LamB/PxpA family. As to quaternary structure, forms a complex composed of PxpA, PxpB and PxpC.

It carries out the reaction 5-oxo-L-proline + ATP + 2 H2O = L-glutamate + ADP + phosphate + H(+). In terms of biological role, catalyzes the cleavage of 5-oxoproline to form L-glutamate coupled to the hydrolysis of ATP to ADP and inorganic phosphate. This is 5-oxoprolinase subunit A 2 from Bradyrhizobium diazoefficiens (strain JCM 10833 / BCRC 13528 / IAM 13628 / NBRC 14792 / USDA 110).